We begin with the raw amino-acid sequence, 464 residues long: UDP-N-acetylmuramate--L-alanine ligase (464 aa).

111–117 serves as a coordination point for ATP; that stretch reads GAHGKTT.

Belongs to the MurCDEF family.

Its subcellular location is the cytoplasm. It carries out the reaction UDP-N-acetyl-alpha-D-muramate + L-alanine + ATP = UDP-N-acetyl-alpha-D-muramoyl-L-alanine + ADP + phosphate + H(+). Its pathway is cell wall biogenesis; peptidoglycan biosynthesis. Functionally, cell wall formation. In Dictyoglomus turgidum (strain DSM 6724 / Z-1310), this protein is UDP-N-acetylmuramate--L-alanine ligase.